A 514-amino-acid chain; its full sequence is Protein nucleotidyltransferase YdiU (514 aa).

ATP is bound by residues G90, G92, R93, K113, D125, G126, R176, and R183. D267 (proton acceptor) is an active-site residue. Mg(2+)-binding residues include N268 and D277. D277 lines the ATP pocket.

Belongs to the SELO family. Mg(2+) serves as cofactor. The cofactor is Mn(2+).

It carries out the reaction L-seryl-[protein] + ATP = 3-O-(5'-adenylyl)-L-seryl-[protein] + diphosphate. The catalysed reaction is L-threonyl-[protein] + ATP = 3-O-(5'-adenylyl)-L-threonyl-[protein] + diphosphate. It catalyses the reaction L-tyrosyl-[protein] + ATP = O-(5'-adenylyl)-L-tyrosyl-[protein] + diphosphate. The enzyme catalyses L-histidyl-[protein] + UTP = N(tele)-(5'-uridylyl)-L-histidyl-[protein] + diphosphate. It carries out the reaction L-seryl-[protein] + UTP = O-(5'-uridylyl)-L-seryl-[protein] + diphosphate. The catalysed reaction is L-tyrosyl-[protein] + UTP = O-(5'-uridylyl)-L-tyrosyl-[protein] + diphosphate. In terms of biological role, nucleotidyltransferase involved in the post-translational modification of proteins. It can catalyze the addition of adenosine monophosphate (AMP) or uridine monophosphate (UMP) to a protein, resulting in modifications known as AMPylation and UMPylation. The sequence is that of Protein nucleotidyltransferase YdiU from Photobacterium profundum (strain SS9).